A 62-amino-acid chain; its full sequence is Large ribosomal subunit protein bL28 (62 aa).

A disordered region spans residues 1-28; that stretch reads MARVCAITGRKARSGNSRSHAMNATKRK.

Belongs to the bacterial ribosomal protein bL28 family.

The chain is Large ribosomal subunit protein bL28 from Bacillus thuringiensis (strain Al Hakam).